We begin with the raw amino-acid sequence, 125 residues long: Bublin coiled-coil protein (125 aa).

Positions 46–95 form a coiled coil; sequence IRKLDTQLDHLNDYMSKMEERLKAHNDRMMETLKQQKEEREKRRRSFHER. The disordered stretch occupies residues 79-125; the sequence is KQQKEEREKRRRSFHERMSQNQSEDEEFKKQMSSILKRVQSVKRTEK.

As to expression, expressed in many epithelial tissues, including the pharynx, intestine, excretory canal and hypodermis.

It localises to the cell junction. It is found in the cytoplasm. Its subcellular location is the cytoskeleton. Its function is as follows. Dynamic component of the endotube in intestinal cells, interacts with intermediate filament and regulates intestinal lumen morphology. The protein is Bublin coiled-coil protein of Caenorhabditis elegans.